The following is a 264-amino-acid chain: Protein hob3 (264 aa).

Residues 17–237 enclose the BAR domain; the sequence is VMMKTGHVER…FDNSVREDYS (221 aa). Coiled coils occupy residues 25–65 and 165–187; these read ERTV…AMTA and RTEK…LVSE.

It is found in the cytoplasm. It localises to the cytoskeleton. Functionally, involved in cytokinesis and septation where it has a role in the localization of F-actin. The polypeptide is Protein hob3 (hob3) (Schizosaccharomyces pombe (strain 972 / ATCC 24843) (Fission yeast)).